The primary structure comprises 157 residues: Ribosome maturation factor RimP (157 aa).

It belongs to the RimP family.

It is found in the cytoplasm. Its function is as follows. Required for maturation of 30S ribosomal subunits. In Thermosynechococcus vestitus (strain NIES-2133 / IAM M-273 / BP-1), this protein is Ribosome maturation factor RimP.